The primary structure comprises 205 residues: Recombination protein RecR (205 aa).

The C4-type zinc finger occupies 60–75 (CKVCHNISDTETCRIC). Residues 83-178 (STICVVESIR…KLSVIARGIS (96 aa)) form the Toprim domain.

Belongs to the RecR family.

Its function is as follows. May play a role in DNA repair. It seems to be involved in an RecBC-independent recombinational process of DNA repair. It may act with RecF and RecO. This chain is Recombination protein RecR, found in Phocaeicola vulgatus (strain ATCC 8482 / DSM 1447 / JCM 5826 / CCUG 4940 / NBRC 14291 / NCTC 11154) (Bacteroides vulgatus).